We begin with the raw amino-acid sequence, 643 residues long: Protein THEMIS2 (643 aa).

CABIT stretches follow at residues 1–238 (MEPV…TASS) and 239–514 (RHVH…KAKG). The disordered stretch occupies residues 546–631 (EIQAPPPRPP…RQDLDDDEHD (86 aa)). The residue at position 593 (Thr593) is a Phosphothreonine. Basic residues predominate over residues 609-619 (PAHRKGHRPAK). Tyr632 is subject to Phosphotyrosine.

This sequence belongs to the themis family. In terms of assembly, interacts with VAV1. Interacts with LAT. Interacts constitutively with GRB2, LYN and PLCG2; these interactions increase the activation of PLCG2 and its downstream pathways following B cell receptor stimulation. Post-translationally, phosphorylation at Tyr-632 is induced by LPS. Phosphorylated by Src kinases (Lck or Fyn) following BCR engagement. In terms of tissue distribution, expressed in different endometrial adenocarcinoma cell lines and various other cell lines apart from the prostate cell line LNCaP and the ovarian cancer cell line BG1.

The protein localises to the nucleus. It is found in the cytoplasm. Its function is as follows. May constitute a control point in macrophage inflammatory response, promoting LPS-induced TLR4-mediated TNF production. Determines the threshold for activation of B cells by low-affinity and low-avidity ligands via PLCG2 activation and its downstream pathways. In Homo sapiens (Human), this protein is Protein THEMIS2.